Consider the following 311-residue polypeptide: Aspartate carbamoyltransferase catalytic subunit (311 aa).

Residues Arg55 and Thr56 each coordinate carbamoyl phosphate. Lys85 contacts L-aspartate. Carbamoyl phosphate contacts are provided by Arg106, His135, and Gln138. Residues Arg168 and Arg230 each contribute to the L-aspartate site. Leu268 and Pro269 together coordinate carbamoyl phosphate.

Belongs to the aspartate/ornithine carbamoyltransferase superfamily. ATCase family. As to quaternary structure, heterododecamer (2C3:3R2) of six catalytic PyrB chains organized as two trimers (C3), and six regulatory PyrI chains organized as three dimers (R2).

It catalyses the reaction carbamoyl phosphate + L-aspartate = N-carbamoyl-L-aspartate + phosphate + H(+). The protein operates within pyrimidine metabolism; UMP biosynthesis via de novo pathway; (S)-dihydroorotate from bicarbonate: step 2/3. Functionally, catalyzes the condensation of carbamoyl phosphate and aspartate to form carbamoyl aspartate and inorganic phosphate, the committed step in the de novo pyrimidine nucleotide biosynthesis pathway. This Pectobacterium carotovorum subsp. carotovorum (strain PC1) protein is Aspartate carbamoyltransferase catalytic subunit.